The primary structure comprises 555 residues: Wee1-like protein kinase 2 (555 aa).

Residues 1–112 (MADTETDQGL…NFSTPKNSLG (112 aa)) are disordered. Serine 15 bears the Phosphoserine; by CaMK2 and PKA mark. Residues 26–41 (EGQMTAQDIGGAQSQK) are compositionally biased toward polar residues. The span at 57 to 72 (TRDELHTSLSRDKESP) shows a compositional bias: basic and acidic residues. Residue serine 71 is modified to Phosphoserine. Polar residues predominate over residues 102–112 (TNFSTPKNSLG). The Nuclear localization signal signature appears at 167 to 169 (KRK). The region spanning 208–485 (FFEIEKIGVG…ARSRILWPFL (278 aa)) is the Protein kinase domain. Residues 214–222 (IGVGEFGTV) and lysine 237 contribute to the ATP site. Residues 310-324 (KLKDILLQISLGLKY) carry the Nuclear export signal motif. The active-site Proton acceptor is the aspartate 334. Residues asparagine 339 and aspartate 375 each contribute to the Mg(2+) site. A coiled-coil region spans residues 488–514 (TDELQKQLNLEKSKTATLKRELKKARH).

Belongs to the protein kinase superfamily. Ser/Thr protein kinase family. WEE1 subfamily. Post-translationally, phosphorylated by PKA at Ser-15 in vitro, leading to activate kinase activity. Phosphorylation at Ser-15 by CaMK2, leading to increase its activity and promote metaphase II exit during egg activation. Ovary-specific.

It is found in the cytoplasm. The protein resides in the nucleus. The enzyme catalyses L-tyrosyl-[protein] + ATP = O-phospho-L-tyrosyl-[protein] + ADP + H(+). Functionally, oocyte-specific protein tyrosine kinase that phosphorylates and inhibits CDK1 and acts as a key regulator of meiosis during both prophase I and metaphase II. Required to maintain meiotic arrest in oocytes during the germinal vesicle (GV) stage, a long period of quiescence at dictyate prophase I, by phosphorylating CDK1 at 'Tyr-15', leading to inhibit CDK1 activity and prevent meiotic reentry. Also required for metaphase II exit during egg activation by phosphorylating CDK1 at 'Tyr-15', to ensure exit from meiosis in oocytes and promote pronuclear formation. The polypeptide is Wee1-like protein kinase 2 (Wee2) (Mus musculus (Mouse)).